Consider the following 126-residue polypeptide: Small ribosomal subunit protein uS12 (126 aa).

The interval 1-26 (MPTINQLVRKGRASETTKSKSPALQD) is disordered. The residue at position 89 (D89) is a 3-methylthioaspartic acid. Residues 102–126 (LDTQGVKDRRQARSKYGAKRAKAAK) form a disordered region. Residues 113 to 126 (ARSKYGAKRAKAAK) are compositionally biased toward basic residues.

It belongs to the universal ribosomal protein uS12 family. In terms of assembly, part of the 30S ribosomal subunit. Contacts proteins S8 and S17. May interact with IF1 in the 30S initiation complex.

Its function is as follows. With S4 and S5 plays an important role in translational accuracy. In terms of biological role, interacts with and stabilizes bases of the 16S rRNA that are involved in tRNA selection in the A site and with the mRNA backbone. Located at the interface of the 30S and 50S subunits, it traverses the body of the 30S subunit contacting proteins on the other side and probably holding the rRNA structure together. The combined cluster of proteins S8, S12 and S17 appears to hold together the shoulder and platform of the 30S subunit. The protein is Small ribosomal subunit protein uS12 of Burkholderia mallei (strain ATCC 23344).